Consider the following 608-residue polypeptide: Kinetochore protein NUF2 (608 aa).

Residues 121 to 125 (IGNLR) form a required for nuclear localization and function region. Coiled-coil stretches lie at residues 176 to 319 (FESQ…QQKL) and 358 to 460 (REKL…IEEE).

Belongs to the NUF2 family.

It localises to the chromosome. It is found in the centromere. The protein localises to the kinetochore. Its function is as follows. Required for anchoring centrosomal cores to the nuclear periphery. Plays a role in chromosome segregation but is dispensable for centromere clustering. This chain is Kinetochore protein NUF2, found in Toxoplasma gondii (strain ATCC 50611 / Me49).